The sequence spans 121 residues: Small ribosomal subunit protein uS12c (121 aa).

Belongs to the universal ribosomal protein uS12 family. Part of the 30S ribosomal subunit.

The protein localises to the plastid. It localises to the apicoplast. Its function is as follows. With S4 and S5 plays an important role in translational accuracy. Located at the interface of the 30S and 50S subunits. The protein is Small ribosomal subunit protein uS12c (rps12) of Toxoplasma gondii.